Reading from the N-terminus, the 317-residue chain is uncharacterized protein (317 aa).

The protein to M.avium MAV169.

This is an uncharacterized protein from Mycobacterium tuberculosis (strain CDC 1551 / Oshkosh).